Here is a 338-residue protein sequence, read N- to C-terminus: Uroporphyrinogen decarboxylase (338 aa).

Substrate-binding positions include 27–31, aspartate 77, tyrosine 151, serine 203, and histidine 317; that span reads RQAGR.

This sequence belongs to the uroporphyrinogen decarboxylase family. As to quaternary structure, homodimer.

Its subcellular location is the cytoplasm. The catalysed reaction is uroporphyrinogen III + 4 H(+) = coproporphyrinogen III + 4 CO2. The protein operates within porphyrin-containing compound metabolism; protoporphyrin-IX biosynthesis; coproporphyrinogen-III from 5-aminolevulinate: step 4/4. Its function is as follows. Catalyzes the decarboxylation of four acetate groups of uroporphyrinogen-III to yield coproporphyrinogen-III. This chain is Uroporphyrinogen decarboxylase, found in Wolbachia pipientis wMel.